We begin with the raw amino-acid sequence, 564 residues long: 60 kDa lysophospholipase (564 aa).

An Asparaginase/glutaminase domain is found at 9–355; sequence RRLLAIYTGG…NDRKKLLAKD (347 aa). T19 functions as the Acyl-ester intermediate in the catalytic mechanism. The interval 41 to 350 is asparaginase; the sequence is TLHMFHDEEY…PGLSLNDRKK (310 aa). Substrate-binding positions include 84–86 and 116–117; these read DSS and TD. ANK repeat units follow at residues 141 to 170, 396 to 426, 430 to 459, 463 to 492, and 530 to 559; these read GAQV…YVIP, VLLP…DLNL, SGQT…DVDA, DGQS…RLSP, and DGHC…SVCA. S478 is modified (phosphoserine).

The protein in the N-terminal section; belongs to the asparaginase 1 family. Monomer.

The catalysed reaction is a 1-acyl-sn-glycero-3-phosphocholine + H2O = sn-glycerol 3-phosphocholine + a fatty acid + H(+). It carries out the reaction L-asparagine + H2O = L-aspartate + NH4(+). It catalyses the reaction a 1-O-alkyl-2-acetyl-sn-glycero-3-phosphocholine + H2O = a 1-O-alkyl-sn-glycero-3-phosphocholine + acetate + H(+). The enzyme catalyses 1-hexadecanoyl-sn-glycero-3-phosphocholine + H2O = sn-glycerol 3-phosphocholine + hexadecanoate + H(+). The catalysed reaction is 2 1-hexadecanoyl-sn-glycero-3-phosphocholine = 1,2-dihexadecanoyl-sn-glycero-3-phosphocholine + sn-glycerol 3-phosphocholine. It carries out the reaction 1-octadecanoyl-sn-glycero-3-phosphocholine + H2O = octadecanoate + sn-glycerol 3-phosphocholine + H(+). It catalyses the reaction 1-(9Z-octadecenoyl)-sn-glycero-3-phosphocholine + H2O = sn-glycerol 3-phosphocholine + (9Z)-octadecenoate + H(+). The enzyme catalyses 1-hexadecanoyl-sn-glycero-3-phosphoethanolamine + H2O = sn-glycero-3-phosphoethanolamine + hexadecanoate + H(+). The catalysed reaction is 1-(9Z-octadecenoyl)-sn-glycero-3-phosphoethanolamine + H2O = sn-glycero-3-phosphoethanolamine + (9Z)-octadecenoate + H(+). It carries out the reaction 1-hexadecanoyl-sn-glycero-3-phosphoethanolamine + 1-hexadecanoyl-sn-glycero-3-phosphocholine = 1,2-dihexadecanoyl-sn-glycero-3-phosphoethanolamine + sn-glycerol 3-phosphocholine. It catalyses the reaction 2-(5Z,8Z,11Z,14Z)-eicosatetraenoyl-sn-glycero-3-phosphocholine + H2O = sn-glycerol 3-phosphocholine + (5Z,8Z,11Z,14Z)-eicosatetraenoate + H(+). The enzyme catalyses 2-hexadecanoyl-sn-glycero-3-phosphocholine + H2O = sn-glycerol 3-phosphocholine + hexadecanoate + H(+). The catalysed reaction is 2 2-hexadecanoyl-sn-glycero-3-phosphocholine = 1,2-dihexadecanoyl-sn-glycero-3-phosphocholine + sn-glycerol 3-phosphocholine. It carries out the reaction 1-O-(9Z)-octadecenoyl-2-O-acetyl-sn-glycero-3-phosphocholine + H2O = 2-acetyl-sn-glycero-3-phosphocholine + (9Z)-octadecenoate + H(+). It catalyses the reaction a 1-acyl-sn-glycero-3-phospho-(1D-myo-inositol) + 1-hexadecanoyl-sn-glycero-3-phosphocholine = a 1-acyl-2-hexadecanoyl-sn-glycero-3-phospho-(1D-myo-inositol) + sn-glycerol 3-phosphocholine. The enzyme catalyses 2 2-(5Z,8Z,11Z,14Z)-eicosatetraenoyl-sn-glycero-3-phosphocholine = 1,2-di-(5Z,8Z,11Z,14Z-eicosatetraenoyl)-sn-glycero-3-phosphocholine + sn-glycerol 3-phosphocholine. Exhibits lysophospholipase, transacylase, PAF acetylhydrolase and asparaginase activities. Can catalyze three types of transacylation reactions: (1) acyl transfer from 1-acyl-sn-glycero-3-phosphocholine (1-acyl-GPC) to the sn-1(3) positions of glycerol and 2-acylglycerol (sn-1 to -1(3) transfer), (2) acyl transfer from 1-acyl-GPC to the sn-2 positions of 1-acyl-GPC, 1-acyl-sn-glycero-3-phosphoethanolamine (1-acyl-GPE), and other lysophospholipids (sn-1 to -2 transfer) and (3) acyl transfer from 2-acyl-GPC to the sn-1 position of 2-acyl-GPC and 2-acyl-GPE (sn-2 to -1 transfer). Mediates the synthesis of 1-arachidonoyl species of phospholipids by transferring the arachidonoyl residue from 2-arachidonoyl lysophospholipid to the sn-1 position of 2-acyl lysophospholipid. This chain is 60 kDa lysophospholipase (Aspg), found in Mus musculus (Mouse).